Reading from the N-terminus, the 183-residue chain is Potassium-transporting ATPase KdpC subunit (183 aa).

Residues 10–30 (ASLLVLSLVTGVAYPLLVTGI) traverse the membrane as a helical segment.

This sequence belongs to the KdpC family. In terms of assembly, the system is composed of three essential subunits: KdpA, KdpB and KdpC.

The protein localises to the cell inner membrane. Its function is as follows. Part of the high-affinity ATP-driven potassium transport (or Kdp) system, which catalyzes the hydrolysis of ATP coupled with the electrogenic transport of potassium into the cytoplasm. This subunit acts as a catalytic chaperone that increases the ATP-binding affinity of the ATP-hydrolyzing subunit KdpB by the formation of a transient KdpB/KdpC/ATP ternary complex. The polypeptide is Potassium-transporting ATPase KdpC subunit (Pseudomonas aeruginosa (strain UCBPP-PA14)).